The following is a 100-amino-acid chain: Urease subunit gamma (100 aa).

This sequence belongs to the urease gamma subunit family. Heterotrimer of UreA (gamma), UreB (beta) and UreC (alpha) subunits. Three heterotrimers associate to form the active enzyme.

The protein localises to the cytoplasm. It carries out the reaction urea + 2 H2O + H(+) = hydrogencarbonate + 2 NH4(+). The protein operates within nitrogen metabolism; urea degradation; CO(2) and NH(3) from urea (urease route): step 1/1. The sequence is that of Urease subunit gamma from Cereibacter sphaeroides (strain ATCC 17025 / ATH 2.4.3) (Rhodobacter sphaeroides).